Consider the following 465-residue polypeptide: Cysteine--tRNA ligase (465 aa).

Position 28 (cysteine 28) interacts with Zn(2+). The short motif at 30 to 40 is the 'HIGH' region element; the sequence is MTVYDYCHLGH. Zn(2+)-binding residues include cysteine 209, histidine 234, and glutamate 238. Positions 266-270 match the 'KMSKS' region motif; the sequence is KMSKS. Residue lysine 269 coordinates ATP.

This sequence belongs to the class-I aminoacyl-tRNA synthetase family. Monomer. Zn(2+) is required as a cofactor.

It localises to the cytoplasm. The enzyme catalyses tRNA(Cys) + L-cysteine + ATP = L-cysteinyl-tRNA(Cys) + AMP + diphosphate. The protein is Cysteine--tRNA ligase of Nitrosomonas europaea (strain ATCC 19718 / CIP 103999 / KCTC 2705 / NBRC 14298).